Consider the following 134-residue polypeptide: Ribonuclease VapC40 (134 aa).

The PINc domain occupies 3–126 (APDTSVLVAG…LRAVETYERL (124 aa)). Mg(2+)-binding residues include aspartate 5 and aspartate 98.

This sequence belongs to the PINc/VapC protein family. It depends on Mg(2+) as a cofactor.

In terms of biological role, toxic component of a type II toxin-antitoxin (TA) system. An RNase. Its cognate antitoxin is VapB40. The protein is Ribonuclease VapC40 of Mycobacterium tuberculosis (strain CDC 1551 / Oshkosh).